The chain runs to 90 residues: MPFGLIVIGIILAIAAYRDTLGELFSIIKDVSKDAKGFGYWVLAAVILGFAASIKPIKEPVNAFMILLMIVLLIRKRGAIDQISNQLRGS.

A run of 3 helical transmembrane segments spans residues 1-21 (MPFG…RDTL), 37-57 (GFGY…IKPI), and 60-80 (PVNA…RGAI).

It localises to the virion membrane. Its function is as follows. Component of the phage injection machinery. Required for DNA injection in the membrane transformation event. Involved in the formation of the membrane tail tube to connect the virus interior with the host cytosol. Essential for viral infectivity. The protein is Protein P18 (XVIII) of Acinetobacter calcoaceticus (Arthrobacter siderocapsulatus).